The following is a 356-amino-acid chain: Cobalt-precorrin-5B C(1)-methyltransferase (356 aa).

The protein belongs to the CbiD family.

The enzyme catalyses Co-precorrin-5B + S-adenosyl-L-methionine = Co-precorrin-6A + S-adenosyl-L-homocysteine. The protein operates within cofactor biosynthesis; adenosylcobalamin biosynthesis; cob(II)yrinate a,c-diamide from sirohydrochlorin (anaerobic route): step 6/10. In terms of biological role, catalyzes the methylation of C-1 in cobalt-precorrin-5B to form cobalt-precorrin-6A. This is Cobalt-precorrin-5B C(1)-methyltransferase from Citrifermentans bemidjiense (strain ATCC BAA-1014 / DSM 16622 / JCM 12645 / Bem) (Geobacter bemidjiensis).